The chain runs to 101 residues: Large ribosomal subunit protein eL30 (101 aa).

Belongs to the eukaryotic ribosomal protein eL30 family.

The polypeptide is Large ribosomal subunit protein eL30 (Pyrobaculum islandicum (strain DSM 4184 / JCM 9189 / GEO3)).